A 200-amino-acid chain; its full sequence is Casparian strip membrane protein 1 (200 aa).

At 1–38 (MSTTIEIPAESSAVAKGKAPLIGASSSSYEKKGGYKKG) the chain is on the cytoplasmic side. Residues 39-59 (IAIFDFILRLGAVISALSAAA) form a helical membrane-spanning segment. Over 60 to 88 (TMGTSDETLPFFTQFFQFEAGYDDFPTFQ) the chain is Extracellular. A helical membrane pass occupies residues 89–109 (FFVIAMGFVGGYLVLSLPFSV). Over 110 to 121 (VAIIRPHAVGIR) the chain is Cytoplasmic. A helical membrane pass occupies residues 122-142 (LLLLILDTVALTLNTAAAAAA). At 143 to 175 (AAIVYLAHNGNQSANWLAVCQQFGDFCQKVSGG) the chain is on the extracellular side. Asparagine 153 carries an N-linked (GlcNAc...) asparagine glycan. The helical transmembrane segment at 176–196 (VVASFVSVLVFLLLVVMSAVA) threads the bilayer. Residues 197-200 (LRKH) lie on the Cytoplasmic side of the membrane.

Belongs to the Casparian strip membrane proteins (CASP) family. In terms of assembly, homodimer and heterodimers.

It localises to the cell membrane. In terms of biological role, regulates membrane-cell wall junctions and localized cell wall deposition. Required for establishment of the Casparian strip membrane domain (CSD) and the subsequent formation of Casparian strips, a cell wall modification of the root endodermis that determines an apoplastic barrier between the intraorganismal apoplasm and the extraorganismal apoplasm and prevents lateral diffusion. This is Casparian strip membrane protein 1 from Ricinus communis (Castor bean).